A 277-amino-acid polypeptide reads, in one-letter code: NAD kinase (277 aa).

Asp-67 acts as the Proton acceptor in catalysis. NAD(+)-binding positions include 67-68 (DG), Arg-72, 137-138 (NE), Lys-148, Arg-165, Asp-167, 178-183 (TGYAMS), Leu-202, and Gln-236.

It belongs to the NAD kinase family. A divalent metal cation serves as cofactor.

It is found in the cytoplasm. The enzyme catalyses NAD(+) + ATP = ADP + NADP(+) + H(+). Involved in the regulation of the intracellular balance of NAD and NADP, and is a key enzyme in the biosynthesis of NADP. Catalyzes specifically the phosphorylation on 2'-hydroxyl of the adenosine moiety of NAD to yield NADP. The protein is NAD kinase of Pyrococcus furiosus (strain ATCC 43587 / DSM 3638 / JCM 8422 / Vc1).